A 427-amino-acid polypeptide reads, in one-letter code: MKLSTNVKGLKGRIRVPGDKSISHRSIIFGSLAKGVTTVRDILRGEDVLSTMQVFRDLGVQIEDDGNLVKIHGVGFEGLQAPKNKLDMGNSGTSIRLISGVLAGQDFEAEMFGDDSLSKRPMDRVTIPLRQMGVEIAGRTERDLPPLKMKGSRELQPIHYQLPVASAQVKSALIFAALQAQGESVIIEKEITRNHTEDMIAQFGGQIEVEGKEIRIQGGQEFTAQEVTVPGDISSAAFWLVAGLIVPDSKIVLENVGINETRTGILEVIEAMGGRMTLSDVDPVAKSATITVETSELKGTEIGGEIIPRLIDELPIIALLATQAQGRTVIRDAEELKVKETDRIQVVADALNSMGAAITPTEDGMIIEGKTPLHGAQVNTLGDHRIGMMTAIAALLAQSSQVELERSEAIKTSYPNFFNDLEGLMHG.

3-phosphoshikimate-binding residues include Lys20, Ser21, and Arg25. Lys20 lines the phosphoenolpyruvate pocket. Phosphoenolpyruvate is bound by residues Gly92 and Arg120. 3-phosphoshikimate is bound by residues Ser166, Gln168, Asp312, and Lys339. Residue Gln168 participates in phosphoenolpyruvate binding. Asp312 functions as the Proton acceptor in the catalytic mechanism. The phosphoenolpyruvate site is built by Arg343 and Arg385.

It belongs to the EPSP synthase family. In terms of assembly, monomer.

It localises to the cytoplasm. It catalyses the reaction 3-phosphoshikimate + phosphoenolpyruvate = 5-O-(1-carboxyvinyl)-3-phosphoshikimate + phosphate. The protein operates within metabolic intermediate biosynthesis; chorismate biosynthesis; chorismate from D-erythrose 4-phosphate and phosphoenolpyruvate: step 6/7. In terms of biological role, catalyzes the transfer of the enolpyruvyl moiety of phosphoenolpyruvate (PEP) to the 5-hydroxyl of shikimate-3-phosphate (S3P) to produce enolpyruvyl shikimate-3-phosphate and inorganic phosphate. This is 3-phosphoshikimate 1-carboxyvinyltransferase from Streptococcus sanguinis (strain SK36).